We begin with the raw amino-acid sequence, 1047 residues long: Isoleucine--tRNA ligase (1047 aa).

The 'HIGH' region signature appears at 52 to 62 (PTANGMPGAHH). Residues 600–604 (KMSKH) carry the 'KMSKS' region motif. Residue Lys-603 participates in ATP binding.

Belongs to the class-I aminoacyl-tRNA synthetase family. IleS type 2 subfamily. As to quaternary structure, monomer. Zn(2+) serves as cofactor.

The protein resides in the cytoplasm. The catalysed reaction is tRNA(Ile) + L-isoleucine + ATP = L-isoleucyl-tRNA(Ile) + AMP + diphosphate. Catalyzes the attachment of isoleucine to tRNA(Ile). As IleRS can inadvertently accommodate and process structurally similar amino acids such as valine, to avoid such errors it has two additional distinct tRNA(Ile)-dependent editing activities. One activity is designated as 'pretransfer' editing and involves the hydrolysis of activated Val-AMP. The other activity is designated 'posttransfer' editing and involves deacylation of mischarged Val-tRNA(Ile). The polypeptide is Isoleucine--tRNA ligase (Streptomyces avermitilis (strain ATCC 31267 / DSM 46492 / JCM 5070 / NBRC 14893 / NCIMB 12804 / NRRL 8165 / MA-4680)).